The chain runs to 184 residues: ATP synthase subunit b (184 aa).

The chain crosses the membrane as a helical span at residues 16-36; the sequence is LIPPIPELVIGLIAFVIVFGF.

The protein belongs to the ATPase B chain family. F-type ATPases have 2 components, F(1) - the catalytic core - and F(0) - the membrane proton channel. F(1) has five subunits: alpha(3), beta(3), gamma(1), delta(1), epsilon(1). F(0) has three main subunits: a(1), b(2) and c(10-14). The alpha and beta chains form an alternating ring which encloses part of the gamma chain. F(1) is attached to F(0) by a central stalk formed by the gamma and epsilon chains, while a peripheral stalk is formed by the delta and b chains.

The protein localises to the cell membrane. F(1)F(0) ATP synthase produces ATP from ADP in the presence of a proton or sodium gradient. F-type ATPases consist of two structural domains, F(1) containing the extramembraneous catalytic core and F(0) containing the membrane proton channel, linked together by a central stalk and a peripheral stalk. During catalysis, ATP synthesis in the catalytic domain of F(1) is coupled via a rotary mechanism of the central stalk subunits to proton translocation. Its function is as follows. Component of the F(0) channel, it forms part of the peripheral stalk, linking F(1) to F(0). This is ATP synthase subunit b from Streptomyces coelicolor (strain ATCC BAA-471 / A3(2) / M145).